Consider the following 277-residue polypeptide: Orotidine 5'-phosphate decarboxylase (277 aa).

K95 functions as the Proton donor in the catalytic mechanism.

Belongs to the OMP decarboxylase family. Type 2 subfamily.

It carries out the reaction orotidine 5'-phosphate + H(+) = UMP + CO2. The protein operates within pyrimidine metabolism; UMP biosynthesis via de novo pathway; UMP from orotate: step 2/2. In Mycolicibacterium vanbaalenii (strain DSM 7251 / JCM 13017 / BCRC 16820 / KCTC 9966 / NRRL B-24157 / PYR-1) (Mycobacterium vanbaalenii), this protein is Orotidine 5'-phosphate decarboxylase.